The following is a 568-amino-acid chain: Lipoprotein LpqB (568 aa).

The signal sequence occupies residues 1–23 (MSKISTKLKALSAVLSVTTLVAG). A lipid anchor (N-palmitoyl cysteine) is attached at C24. Residue C24 is the site of S-diacylglycerol cysteine attachment.

The protein belongs to the LpqB lipoprotein family.

It localises to the cell membrane. The polypeptide is Lipoprotein LpqB (Corynebacterium glutamicum (strain R)).